A 354-amino-acid polypeptide reads, in one-letter code: Methionine import ATP-binding protein MetN (354 aa).

An ABC transporter domain is found at 8–250; the sequence is LDHIDITFRQ…PKEALTQKFI (243 aa). 42 to 49 is a binding site for ATP; sequence GYSGAGKS.

This sequence belongs to the ABC transporter superfamily. Methionine importer (TC 3.A.1.24) family. In terms of assembly, the complex is composed of two ATP-binding proteins (MetN), two transmembrane proteins (MetI) and a solute-binding protein (MetQ).

The protein resides in the cell membrane. It catalyses the reaction L-methionine(out) + ATP + H2O = L-methionine(in) + ADP + phosphate + H(+). It carries out the reaction D-methionine(out) + ATP + H2O = D-methionine(in) + ADP + phosphate + H(+). Functionally, part of the ABC transporter complex MetNIQ involved in methionine import. Responsible for energy coupling to the transport system. The polypeptide is Methionine import ATP-binding protein MetN (Streptococcus pyogenes serotype M6 (strain ATCC BAA-946 / MGAS10394)).